The primary structure comprises 228 residues: Sugar fermentation stimulation protein homolog (228 aa).

Belongs to the SfsA family.

This Desulfitobacterium hafniense (strain DSM 10664 / DCB-2) protein is Sugar fermentation stimulation protein homolog.